The primary structure comprises 541 residues: DEAD-box ATP-dependent RNA helicase 57 (541 aa).

Acidic residues predominate over residues 43 to 52 (VEEEEDTEQP). Positions 43–72 (VEEEEDTEQPEAEKVIVSSKKRKRRSSNSV) are disordered. The short motif at 141-169 (ELSSRYGCEGYILRNLAELGFKEPTPIQR) is the Q motif element. Residues 172–342 (IPILLSGREC…RSIMHDAVRV (171 aa)) enclose the Helicase ATP-binding domain. An ATP-binding site is contributed by 185-192 (APTGSGKT). A DEAD box motif is present at residues 289–292 (DESD). In terms of domain architecture, Helicase C-terminal spans 370-514 (ALRQSFAESL…EVPSWIMSLK (145 aa)). Residues 517–541 (KWRKHRPRRDSISTKPKADKNDTDE) form a disordered region. Residues 525–541 (RDSISTKPKADKNDTDE) are compositionally biased toward basic and acidic residues.

It belongs to the DEAD box helicase family. DDX52/ROK1 subfamily.

The enzyme catalyses ATP + H2O = ADP + phosphate + H(+). The polypeptide is DEAD-box ATP-dependent RNA helicase 57 (RH57) (Arabidopsis thaliana (Mouse-ear cress)).